An 88-amino-acid chain; its full sequence is uncharacterized protein (88 aa).

The protein belongs to the phD/YefM antitoxin family.

This is an uncharacterized protein from Sinorhizobium fredii (strain NBRC 101917 / NGR234).